The sequence spans 654 residues: NADPH-dependent diflavin oxidoreductase 1 (654 aa).

Residues 1-10 (MSGSQSSGSP) show a composition bias toward low complexity. Positions 1–22 (MSGSQSSGSPGSPGPPGPPGRS) are disordered. A Flavodoxin-like domain is found at 23–167 (ALVVYGSETG…TFIPWLAGFR (145 aa)). Residues 29–34 (SETGNA), 76–79 (STTG), and 114–123 (LGDSSYPKFN) contribute to the FMN site. In terms of domain architecture, FAD-binding FR-type spans 235–485 (HDSLTATLVQ…QLQRGGLNSS (251 aa)). FAD contacts are provided by residues Arg389, 419 to 422 (RQFS), and 458 to 461 (GVCT). NADP(+) contacts are provided by residues Thr500, 568 to 569 (SR), and 574 to 578 (KVYVQ). Trp654 provides a ligand contact to FAD.

Belongs to the NADPH-dependent diflavin oxidoreductase NDOR1 family. It in the N-terminal section; belongs to the flavodoxin family. This sequence in the C-terminal section; belongs to the flavoprotein pyridine nucleotide cytochrome reductase family. Interacts with dre2; as part of the cytosolic iron-sulfur (Fe-S) protein assembly (CIA) machinery. The cofactor is FAD. FMN serves as cofactor.

It is found in the cytoplasm. The protein localises to the mitochondrion. The enzyme catalyses 2 oxidized [2Fe-2S]-[protein] + NADPH = 2 reduced [2Fe-2S]-[protein] + NADP(+) + H(+). Functionally, NADPH-dependent reductase which is a central component of the cytosolic iron-sulfur (Fe-S) protein assembly (CIA) machinery. Transfers electrons from NADPH via its FAD and FMN prosthetic groups to the [2Fe-2S] cluster of dre2, another key component of the CIA machinery. In turn, this reduced cluster provides electrons for assembly of cytosolic iron-sulfur cluster proteins. Positively controls H(2)O(2)-induced cell death. This Emericella nidulans (strain FGSC A4 / ATCC 38163 / CBS 112.46 / NRRL 194 / M139) (Aspergillus nidulans) protein is NADPH-dependent diflavin oxidoreductase 1.